Reading from the N-terminus, the 223-residue chain is Thymidylate kinase (223 aa).

7 to 14 contributes to the ATP binding site; that stretch reads GIDGAGKS.

The protein belongs to the thymidylate kinase family.

The catalysed reaction is dTMP + ATP = dTDP + ADP. In terms of biological role, phosphorylation of dTMP to form dTDP in both de novo and salvage pathways of dTTP synthesis. The chain is Thymidylate kinase from Prosthecochloris aestuarii (strain DSM 271 / SK 413).